Reading from the N-terminus, the 917-residue chain is Interleukin-6 receptor subunit beta (917 aa).

A signal peptide spans 1–22; it reads MSAPRIWLAQALLFFLTTESIG. Residues 23–617 are Extracellular-facing; sequence QLLEPCGYIY…TPKFAQGEIE (595 aa). The Ig-like C2-type domain occupies 26 to 120; that stretch reads EPCGYIYPEF…IEQNVYGVTM (95 aa). Cystine bridges form between cysteine 28-cysteine 54 and cysteine 48-cysteine 103. Residues asparagine 43, asparagine 61, asparagine 83, and asparagine 131 are each glycosylated (N-linked (GlcNAc...) asparagine). 5 Fibronectin type-III domains span residues 128-221, 222-322, 327-417, 422-515, and 517-611; these read KPTN…VKPT, PPYN…TYED, PPSF…IPSP, AYSV…LKQA, and PARG…TPKF. Cysteine 134 and cysteine 144 are disulfide-bonded. N-linked (GlcNAc...) asparagine glycosylation is present at asparagine 157. A disulfide bridge connects residues cysteine 172 and cysteine 180. An N-linked (GlcNAc...) asparagine glycan is attached at asparagine 225. Residues 308–312 carry the WSXWS motif motif; the sequence is WSDWS. An N-linked (GlcNAc...) asparagine glycan is attached at asparagine 388. Residues cysteine 456 and cysteine 464 are joined by a disulfide bond. Residues asparagine 476 and asparagine 551 are each glycosylated (N-linked (GlcNAc...) asparagine). A helical membrane pass occupies residues 618 to 639; sequence AIVVPVCLAFLLTTLLGVLFCF. At 640–917 the chain is on the cytoplasmic side; the sequence is NKRDLIKKHI…TVRQGGYMPQ (278 aa). The short motif at 649-657 is the Box 1 motif element; sequence IWPNVPDPS. Disordered stretches follow at residues 658 to 678 and 719 to 754; these read KSHI…NSKD and TEGH…TAST. 2 positions are modified to phosphoserine: serine 659 and serine 665. Over residues 729–753 the composition is skewed to low complexity; the sequence is SSCMSSSRPSISSNEENESAQSTAS. Serine 780, serine 787, serine 827, and serine 837 each carry phosphoserine. The tract at residues 898-917 is disordered; the sequence is EEIPKSYLPQTVRQGGYMPQ.

This sequence belongs to the type I cytokine receptor family. Type 2 subfamily. In terms of assembly, component of a hexamer of two molecules each of IL6, IL6R and IL6ST; associates with the complex IL6:IL6R but does not interact with IL6. Forms heterodimers composed of LIFR and IL6ST (type I OSM receptor) which are activated by LIF and OSM. Also forms heterodimers composed of OSMR and IL6ST (type II receptor) which are activated by OSM but not by LIF. Interacts with HCK. Interacts with INPP5D/SHIP1. Interacts with SRC and YES. Interacts with ARMH4; this interaction prevents IL6ST protein homodimerization and bridges ARMH4 with IL6R and STAT3 and therefore inhibits phosphorylation of STAT3 at 'Tyr-705'. In terms of processing, phosphorylation of Ser-780 down-regulates cell surface expression. Post-translationally, heavily N-glycosylated. Glycosylation is required for protein stability and localization in plasma membrane but not for ligand binding. Expression not restricted to IL6-responsive cells. Found in tissues such as brain, heart, thymus, spleen, kidney, lung and liver. Found in all the cell lines tested except BaF-B03. Expressed paraventricular nucleus of the hypothalamus.

It localises to the cell membrane. Signal-transducing molecule. The receptor systems for IL6, LIF, OSM, CNTF, IL11, CTF1 and BSF3 can utilize IL6ST for initiating signal transmission. Binding of IL6 to IL6R induces IL6ST homodimerization and formation of a high-affinity receptor complex, which activates the intracellular JAK-MAPK and JAK-STAT3 signaling pathways. That causes phosphorylation of IL6ST tyrosine residues which in turn activates STAT3. In parallel, the IL6 signaling pathway induces the expression of two cytokine receptor signaling inhibitors, SOCS1 and SOCS3, which inhibit JAK and terminate the activity of the IL6 signaling pathway as a negative feedback loop. Also activates the yes-associated protein 1 (YAP) and NOTCH pathways to control inflammation-induced epithelial regeneration, independently of STAT3. Mediates signals which regulate immune response, hematopoiesis, pain control and bone metabolism. Has a role in embryonic development. Essential for survival of motor and sensory neurons and for differentiation of astrocytes. Required for expression of TRPA1 in nociceptive neurons. Required for the maintenance of PTH1R expression in the osteoblast lineage and for the stimulation of PTH-induced osteoblast differentiation. Required for normal trabecular bone mass and cortical bone composition. In Mus musculus (Mouse), this protein is Interleukin-6 receptor subunit beta.